The chain runs to 299 residues: 4-hydroxy-tetrahydrodipicolinate synthase (299 aa).

T51 contacts pyruvate. Catalysis depends on Y139, which acts as the Proton donor/acceptor. Residue K167 is the Schiff-base intermediate with substrate of the active site. I209 is a binding site for pyruvate.

This sequence belongs to the DapA family. Homotetramer; dimer of dimers.

The protein localises to the cytoplasm. It catalyses the reaction L-aspartate 4-semialdehyde + pyruvate = (2S,4S)-4-hydroxy-2,3,4,5-tetrahydrodipicolinate + H2O + H(+). Its pathway is amino-acid biosynthesis; L-lysine biosynthesis via DAP pathway; (S)-tetrahydrodipicolinate from L-aspartate: step 3/4. Functionally, catalyzes the condensation of (S)-aspartate-beta-semialdehyde [(S)-ASA] and pyruvate to 4-hydroxy-tetrahydrodipicolinate (HTPA). The polypeptide is 4-hydroxy-tetrahydrodipicolinate synthase (Methylobacterium radiotolerans (strain ATCC 27329 / DSM 1819 / JCM 2831 / NBRC 15690 / NCIMB 10815 / 0-1)).